A 555-amino-acid polypeptide reads, in one-letter code: Formate--tetrahydrofolate ligase (555 aa).

65–72 is a binding site for ATP; it reads TPAGEGKS.

This sequence belongs to the formate--tetrahydrofolate ligase family.

The catalysed reaction is (6S)-5,6,7,8-tetrahydrofolate + formate + ATP = (6R)-10-formyltetrahydrofolate + ADP + phosphate. The protein operates within one-carbon metabolism; tetrahydrofolate interconversion. The sequence is that of Formate--tetrahydrofolate ligase from Staphylococcus aureus (strain bovine RF122 / ET3-1).